We begin with the raw amino-acid sequence, 928 residues long: Diacylglycerol kinase zeta (928 aa).

Positions 1–14 (MEPRDGSPEARSSD) are enriched in basic and acidic residues. Disordered regions lie at residues 1-46 (MEPR…RRFP) and 59-82 (KSGL…SERQ). The segment covering 15 to 24 (SESASASSSG) has biased composition (low complexity). The segment covering 25–37 (SERDAGPEPDKAP) has biased composition (basic and acidic residues). Phorbol-ester/DAG-type zinc fingers lie at residues 98-152 (HIWF…NFRC) and 172-230 (HHWV…EEPC). Residues 251 to 280 (PQNTLKASKKKKRASFKRKSSKKGPEEGRW) are disordered. The span at 257–272 (ASKKKKRASFKRKSSK) shows a compositional bias: basic residues. The tract at residues 259–273 (KKKKRASFKRKSSKK) is MARCKS homology. Residues 278–416 (GRWRPFIIRP…HVEEGNVVQL (139 aa)) form a mediates interaction with RASGRP1 region. One can recognise a DAGKc domain in the interval 291–425 (PLMKPLLVFV…LDRWDLHAEP (135 aa)). The Nuclear export signal motif lies at 361–369 (LSTLDQLRL). Ser-705 carries the post-translational modification Phosphoserine. A disordered region spans residues 759–788 (ARPDLPTPTSPLPTSPCSPTPRSLQGDAAP). Pro residues predominate over residues 763 to 777 (LPTPTSPLPTSPCSP). Ser-781 is subject to Phosphoserine. ANK repeat units follow at residues 822–852 (QSRT…EILD) and 857–886 (NGET…SLMK). The PDZ-binding signature appears at 924–928 (QETAV).

This sequence belongs to the eukaryotic diacylglycerol kinase family. In terms of assembly, interacts (via PDZ-binding motif) with the PDZ domain of the syntrophin SNTG1 and that of SNX27. Interacts with IRS1 in the absence of insulin; insulin stimulation decreases this interaction. Found in a ternary complex with IRS1 and PIP5K1A in the absence of insulin. Interacts with PIP5K1A. Forms a signaling complex with RASGRP1 and HRAS. Post-translationally, phosphorylation of the MARCKS homology domain by PKC reduces nuclear accumulation of DGK-zeta. Highest levels in brain, and substantial levels in skeletal muscle, heart, and pancreas. In terms of tissue distribution, predominantly expressed in muscle.

Its subcellular location is the nucleus. The protein localises to the cytoplasm. The protein resides in the cytosol. It localises to the cell membrane. It is found in the cell projection. Its subcellular location is the lamellipodium. It catalyses the reaction a 1,2-diacyl-sn-glycerol + ATP = a 1,2-diacyl-sn-glycero-3-phosphate + ADP + H(+). The catalysed reaction is a 1-O-alkyl-sn-glycerol + ATP = a 1-O-alkyl-sn-glycero-3-phosphate + ADP + H(+). The enzyme catalyses 1-O-alkyl-2-acyl-sn-glycerol + ATP = 1-O-alkyl-2-acyl-sn-glycero-3-phosphate + ADP + H(+). It carries out the reaction 1,2-didecanoyl-sn-glycerol + ATP = 1,2-didecanoyl-sn-glycero-3-phosphate + ADP + H(+). It catalyses the reaction 1,2-ditetradecanoyl-sn-glycerol + ATP = 1,2-ditetradecanoyl-sn-glycero-3-phosphate + ADP + H(+). The catalysed reaction is 1-hexadecanoyl-2-(9Z-octadecenoyl)-sn-glycerol + ATP = 1-hexadecanoyl-2-(9Z-octadecenoyl)-sn-glycero-3-phosphate + ADP + H(+). The enzyme catalyses 1-hexadecanoyl-2-(5Z,8Z,11Z,14Z-eicosatetraenoyl)-sn-glycerol + ATP = 1-hexadecanoyl-2-(5Z,8Z,11Z,14Z-eicosatetraenoyl)-sn-glycero-3-phosphate + ADP + H(+). It carries out the reaction 1-octadecanoyl-2-(9Z-octadecenoyl)-sn-glycerol + ATP = 1-octadecanoyl-2-(9Z-octadecenoyl)-sn-glycero-3-phosphate + ADP + H(+). It catalyses the reaction 1-octadecanoyl-2-(5Z,8Z,11Z,14Z-eicosatetraenoyl)-sn-glycerol + ATP = 1-octadecanoyl-2-(5Z,8Z,11Z,14Z-eicosatetraenoyl)-sn-glycero-3-phosphate + ADP + H(+). The catalysed reaction is 1-octadecanoyl-2-(4Z,7Z,10Z,13Z,16Z,19Z-docosahexaenoyl)-sn-glycerol + ATP = 1-octadecanoyl-2-(4Z,7Z,10Z,13Z,16Z,19Z-docosahexaenoyl)-sn-glycero-3-phosphate + ADP + H(+). The enzyme catalyses 1,2-di-(9Z-octadecenoyl)-sn-glycerol + ATP = 1,2-di-(9Z-octadecenoyl)-sn-glycero-3-phosphate + ADP + H(+). It carries out the reaction 1-(9Z-octadecenoyl)-2-hexadecanoyl-sn-glycerol + ATP = 1-(9Z)-octadecenoyl-2-hexadecanoyl-sn-glycero-3-phosphate + ADP + H(+). It catalyses the reaction 1-eicosanoyl-2-(5Z,8Z,11Z,14Z)-eicosatetraenoyl-sn-glycerol + ATP = 1-eicosanoyl-2-(5Z,8Z,11Z,14Z)-eicosatetraenoyl-sn-glycero-3-phosphate + ADP + H(+). The catalysed reaction is 1,2-di-(5Z,8Z,11Z,14Z)-eicosatetraenoyl-sn-glycerol + ATP = 1,2-di-(5Z,8Z,11Z,14Z)-eicosatetraenoyl-sn-glycero-3-phosphate + ADP + H(+). The enzyme catalyses 1-O-hexadecyl-2-acetyl-sn-glycerol + ATP = 1-O-hexadecyl-2-acetyl-sn-glycero-3-phosphate + ADP + H(+). It carries out the reaction 1-O-hexadecyl-2-(5Z,8Z,11Z,14Z-eicosatetraenoyl)-sn-glycerol + ATP = 1-O-hexadecyl-2-(5Z,8Z,11Z,14Z-eicosatetraenoyl)-sn-glycero-3-phosphate + ADP + H(+). It catalyses the reaction 1-O-hexadecyl-2-(9Z-octadecenoyl)-sn-glycerol + ATP = 1-O-hexadecyl-2-(9Z-octadecenoyl)-sn-glycero-3-phosphate + ADP + H(+). The catalysed reaction is 1-O-hexadecyl-sn-glycerol + ATP = 1-O-hexadecyl-sn-glycero-3-phosphate + ADP + H(+). Its pathway is lipid metabolism; glycerolipid metabolism. With respect to regulation, activated by 1,2-diacyl-sn-glycero-3-phosphate/phosphatidic acid irrespective of its acyl chain composition. In terms of biological role, diacylglycerol kinase that converts diacylglycerol/DAG into phosphatidic acid/phosphatidate/PA and regulates the respective levels of these two bioactive lipids. Thereby, acts as a central switch between the signaling pathways activated by these second messengers with different cellular targets and opposite effects in numerous biological processes. Also plays an important role in the biosynthesis of complex lipids. Does not exhibit an acyl chain-dependent substrate specificity among diacylglycerol species. Can also phosphorylate 1-alkyl-2-acylglycerol in vitro but less efficiently and with a preference for alkylacylglycerols containing an arachidonoyl group. The biological processes it is involved in include T cell activation since it negatively regulates T-cell receptor signaling which is in part mediated by diacylglycerol. By generating phosphatidic acid, stimulates PIP5KIA activity which regulates actin polymerization. Through the same mechanism could also positively regulate insulin-induced translocation of SLC2A4 to the cell membrane. Its function is as follows. Regulates RASGRP1 activity. Functionally, does not regulate RASGRP1 activity. This is Diacylglycerol kinase zeta from Homo sapiens (Human).